Reading from the N-terminus, the 467-residue chain is Peptidoglycan-N-acetylmuramic acid deacetylase PdaC (467 aa).

A helical transmembrane segment spans residues 6-26 (IKWFHVLIAVVCVVGLIGFFH). One can recognise a NodB homology domain in the interval 278–452 (KVIALTFDDG…KLTDQGYQLV (175 aa)). Catalysis depends on Asp-285, which acts as the Proton acceptor. Positions 286, 336, and 340 each coordinate a divalent metal cation. Catalysis depends on His-427, which acts as the Proton donor.

The protein in the N-terminal section; belongs to the RsiV family. This sequence in the C-terminal section; belongs to the polysaccharide deacetylase family.

It localises to the cell membrane. Its activity is regulated as follows. Activated by divalent metal cations; Mn(2+) is the most efficient, followed by Ca(2+) and Mg(2+). In contrast to PgdA from S.pneumoniae, these ions are not absolutely required for deacetylase activity. Its function is as follows. Catalyzes the deacetylation of N-acetylmuramic acid (MurNAc) residues in peptidoglycan, a modification that confers resistance to lysosyme. Is not able to deacetylate N-acetylglucosamine (GlcNAc) residues in peptidoglycan, but can deacylate chitin oligomers such as GlcNAc4 and GlcNAc5. Is essentially not active toward chitosan (partially deacetylated GlcNAc polymer) and has very low activity toward chitin (GlcNAc polymer). Does not deacetylate GlcNAc. The chain is Peptidoglycan-N-acetylmuramic acid deacetylase PdaC (pdaC) from Bacillus subtilis (strain 168).